A 292-amino-acid polypeptide reads, in one-letter code: Zinc finger protein SNAI3 (292 aa).

The SNAG domain stretch occupies residues 1–20; sequence MPRSFLVKTHSSHRVPNYRR. 4 C2H2-type zinc fingers span residues 152–174, 183–205, 209–231, and 237–259; these read FECF…RQLH, FTCK…IRTH, CTCK…VRTH, and YACS…LQTH. Residues 265 to 287 form a C2H2-type 5; degenerate zinc finger; sequence YRCRRCTKTFSRMSLLARHEESG.

It belongs to the snail C2H2-type zinc-finger protein family.

The protein resides in the nucleus. Functionally, seems to inhibit myoblast differentiation. Transcriptional repressor of E-box-dependent transactivation of downstream myogenic bHLHs genes. Binds preferentially to the canonical E-box sequences 5'-CAGGTG-3' and 5'-CACCTG-3'. The protein is Zinc finger protein SNAI3 (SNAI3) of Homo sapiens (Human).